The primary structure comprises 264 residues: Segregation and condensation protein A (264 aa).

Belongs to the ScpA family. As to quaternary structure, component of a cohesin-like complex composed of ScpA, ScpB and the Smc homodimer, in which ScpA and ScpB bind to the head domain of Smc. The presence of the three proteins is required for the association of the complex with DNA.

The protein localises to the cytoplasm. Functionally, participates in chromosomal partition during cell division. May act via the formation of a condensin-like complex containing Smc and ScpB that pull DNA away from mid-cell into both cell halves. The chain is Segregation and condensation protein A from Enterococcus faecalis (strain ATCC 700802 / V583).